Reading from the N-terminus, the 320-residue chain is MLDFERPIKELEERIAELHRLAGESEGLQAEISRLEEALEAARRRIYTNLSPYQRVQVARHPERPNFRAYRDALCEDFYELSGDRHYGDDAAVRGGFARIRGRNVVLIGHDKGADVKSRVEGNFGMAHPEGYRKVKRLYGLAARFGLPVVTLVDTPGAFAGRGAEERGQAWAISEDLMALAAVPVPVVSVIIGEGGSGGALAMCLADYLGMLENSYLSVIAPEACASIIFRDSSRAPEAAEALKLTARDLKEHGVVDEVLPEPLGGAHRDPEAAIRAVGEALERVLAGVSGSSPEDLLKRRYARYRRIGSYQRLPGPSSG.

The CoA carboxyltransferase C-terminal domain occupies Arg-34–Gly-288.

Belongs to the AccA family. In terms of assembly, acetyl-CoA carboxylase is a heterohexamer composed of biotin carboxyl carrier protein (AccB), biotin carboxylase (AccC) and two subunits each of ACCase subunit alpha (AccA) and ACCase subunit beta (AccD).

The protein localises to the cytoplasm. It carries out the reaction N(6)-carboxybiotinyl-L-lysyl-[protein] + acetyl-CoA = N(6)-biotinyl-L-lysyl-[protein] + malonyl-CoA. It participates in lipid metabolism; malonyl-CoA biosynthesis; malonyl-CoA from acetyl-CoA: step 1/1. Component of the acetyl coenzyme A carboxylase (ACC) complex. First, biotin carboxylase catalyzes the carboxylation of biotin on its carrier protein (BCCP) and then the CO(2) group is transferred by the carboxyltransferase to acetyl-CoA to form malonyl-CoA. This chain is Acetyl-coenzyme A carboxylase carboxyl transferase subunit alpha, found in Rubrobacter xylanophilus (strain DSM 9941 / JCM 11954 / NBRC 16129 / PRD-1).